The primary structure comprises 189 residues: Peptidyl-tRNA hydrolase (189 aa).

Tyr-16 is a binding site for tRNA. His-21 functions as the Proton acceptor in the catalytic mechanism. Phe-67, Asn-69, and Asn-115 together coordinate tRNA.

It belongs to the PTH family. In terms of assembly, monomer.

It localises to the cytoplasm. It catalyses the reaction an N-acyl-L-alpha-aminoacyl-tRNA + H2O = an N-acyl-L-amino acid + a tRNA + H(+). Functionally, hydrolyzes ribosome-free peptidyl-tRNAs (with 1 or more amino acids incorporated), which drop off the ribosome during protein synthesis, or as a result of ribosome stalling. In terms of biological role, catalyzes the release of premature peptidyl moieties from peptidyl-tRNA molecules trapped in stalled 50S ribosomal subunits, and thus maintains levels of free tRNAs and 50S ribosomes. This Legionella pneumophila (strain Corby) protein is Peptidyl-tRNA hydrolase.